Consider the following 564-residue polypeptide: Dihydropyrimidinase-related protein 5 (564 aa).

Phosphothreonine occurs at positions 509 and 514. Phosphoserine occurs at positions 532 and 538. Arg-559 is modified (omega-N-methylarginine).

This sequence belongs to the metallo-dependent hydrolases superfamily. Hydantoinase/dihydropyrimidinase family. Homotetramer, and heterotetramer with other DPYS-like proteins. Interacts with DPYSL2, DPYSL3 and DPYSL4. Interacts with MAP2 and TUBB3.

It is found in the cytoplasm. Involved in the negative regulation of dendrite outgrowth. The polypeptide is Dihydropyrimidinase-related protein 5 (DPYSL5) (Homo sapiens (Human)).